A 396-amino-acid chain; its full sequence is Phosphoglycerate kinase (396 aa).

Substrate is bound by residues 21-23, arginine 36, 59-62, arginine 119, and arginine 156; these read DFN and HLGK. Residues lysine 206, glutamate 325, and 352–355 each bind ATP; that span reads GGDS.

The protein belongs to the phosphoglycerate kinase family. As to quaternary structure, monomer.

It is found in the cytoplasm. It catalyses the reaction (2R)-3-phosphoglycerate + ATP = (2R)-3-phospho-glyceroyl phosphate + ADP. It participates in carbohydrate degradation; glycolysis; pyruvate from D-glyceraldehyde 3-phosphate: step 2/5. The chain is Phosphoglycerate kinase from Staphylococcus saprophyticus subsp. saprophyticus (strain ATCC 15305 / DSM 20229 / NCIMB 8711 / NCTC 7292 / S-41).